A 226-amino-acid chain; its full sequence is 7-cyano-7-deazaguanine synthase (226 aa).

11–21 (LSGGLDSATCL) contacts ATP. The Zn(2+) site is built by cysteine 191, cysteine 201, cysteine 204, and cysteine 207.

It belongs to the QueC family. Requires Zn(2+) as cofactor.

The enzyme catalyses 7-carboxy-7-deazaguanine + NH4(+) + ATP = 7-cyano-7-deazaguanine + ADP + phosphate + H2O + H(+). It functions in the pathway purine metabolism; 7-cyano-7-deazaguanine biosynthesis. Functionally, catalyzes the ATP-dependent conversion of 7-carboxy-7-deazaguanine (CDG) to 7-cyano-7-deazaguanine (preQ(0)). The chain is 7-cyano-7-deazaguanine synthase from Aromatoleum aromaticum (strain DSM 19018 / LMG 30748 / EbN1) (Azoarcus sp. (strain EbN1)).